The chain runs to 432 residues: 23S rRNA (uracil(1939)-C(5))-methyltransferase RlmD (432 aa).

In terms of domain architecture, TRAM spans 1–53 (MPIGKIESLDHEARGITRQEGKAIFVDGALPGETVEYASFRRKSKFELAHLVH). Cys-66, Cys-72, Cys-75, and Cys-154 together coordinate [4Fe-4S] cluster. S-adenosyl-L-methionine contacts are provided by Gln-263, Phe-292, Asn-297, Glu-313, Asn-341, and Asp-362. Residue Cys-388 is the Nucleophile of the active site.

This sequence belongs to the class I-like SAM-binding methyltransferase superfamily. RNA M5U methyltransferase family. RlmD subfamily.

It carries out the reaction uridine(1939) in 23S rRNA + S-adenosyl-L-methionine = 5-methyluridine(1939) in 23S rRNA + S-adenosyl-L-homocysteine + H(+). Functionally, catalyzes the formation of 5-methyl-uridine at position 1939 (m5U1939) in 23S rRNA. The sequence is that of 23S rRNA (uracil(1939)-C(5))-methyltransferase RlmD from Dechloromonas aromatica (strain RCB).